The sequence spans 260 residues: uncharacterized protein (260 aa).

The HTH iclR-type domain maps to V7–T67. The segment at residues A28–N47 is a DNA-binding region (H-T-H motif). The IclR-ED domain occupies L82–W251.

This is an uncharacterized protein from Escherichia coli (strain K12).